The chain runs to 449 residues: Mycosin-1 (449 aa).

An N-terminal signal peptide occupies residues 1 to 23 (MQRVAVMVLAVLLALFSAPPAWA). Cys51 and Cys120 are oxidised to a cystine. Positions 66-389 (PWANDYLRIQ…AGVIDPVAAL (324 aa)) constitute a Peptidase S8 domain. Residues Asp92 and His123 each act as charge relay system in the active site. 2 disordered regions span residues 160–179 (FQPKGARQDPNDPNTTQTAG) and 240–259 (TGQDCSQNPPPDPSVPSDPR). Positions 170-179 (NDPNTTQTAG) are enriched in polar residues. A disulfide bond links Cys206 and Cys244. Ser334 (charge relay system) is an active-site residue. Residues 421 to 441 (ITAVVIAGATLAFALGIGALA) form a helical membrane-spanning segment.

This sequence belongs to the peptidase S8 family.

The protein localises to the cell membrane. Its function is as follows. May play a dual role in regulation of ESX-1 secretion and virulence. Acts as a protease that cleaves EspB. This Mycolicibacterium smegmatis (strain ATCC 700084 / mc(2)155) (Mycobacterium smegmatis) protein is Mycosin-1.